The primary structure comprises 273 residues: Dermonecrotic toxin LapSicTox-alphaIB1bi (273 aa).

Histidine 5 is an active-site residue. Mg(2+) contacts are provided by glutamate 25 and aspartate 27. The active-site Nucleophile is the histidine 41. 2 cysteine pairs are disulfide-bonded: cysteine 45–cysteine 51 and cysteine 47–cysteine 190. A Mg(2+)-binding site is contributed by aspartate 85. N-linked (GlcNAc...) asparagine glycans are attached at residues asparagine 189 and asparagine 250.

Belongs to the arthropod phospholipase D family. Class II subfamily. Mg(2+) serves as cofactor. As to expression, expressed by the venom gland.

It is found in the secreted. It carries out the reaction an N-(acyl)-sphingosylphosphocholine = an N-(acyl)-sphingosyl-1,3-cyclic phosphate + choline. The catalysed reaction is an N-(acyl)-sphingosylphosphoethanolamine = an N-(acyl)-sphingosyl-1,3-cyclic phosphate + ethanolamine. It catalyses the reaction a 1-acyl-sn-glycero-3-phosphocholine = a 1-acyl-sn-glycero-2,3-cyclic phosphate + choline. The enzyme catalyses a 1-acyl-sn-glycero-3-phosphoethanolamine = a 1-acyl-sn-glycero-2,3-cyclic phosphate + ethanolamine. Dermonecrotic toxins cleave the phosphodiester linkage between the phosphate and headgroup of certain phospholipids (sphingolipid and lysolipid substrates), forming an alcohol (often choline) and a cyclic phosphate. This toxin acts on sphingomyelin (SM). It may also act on ceramide phosphoethanolamine (CPE), lysophosphatidylcholine (LPC) and lysophosphatidylethanolamine (LPE), but not on lysophosphatidylserine (LPS), and lysophosphatidylglycerol (LPG). It acts by transphosphatidylation, releasing exclusively cyclic phosphate products as second products. Induces dermonecrosis, hemolysis, increased vascular permeability, edema, inflammatory response, and platelet aggregation. In Loxosceles apachea (Apache recluse spider), this protein is Dermonecrotic toxin LapSicTox-alphaIB1bi.